A 157-amino-acid chain; its full sequence is Vitamin K-dependent protein C (157 aa).

One can recognise a Peptidase S1 domain in the interval Glu-1–Val-157. The N-linked (GlcNAc...) asparagine glycan is linked to Asn-17. Residue Asp-26 is the Charge relay system of the active site. The N-linked (GlcNAc...) asparagine glycan is linked to Asn-78. Intrachain disulfides connect Cys-96–Cys-110 and Cys-121–Cys-149. The Charge relay system role is filled by Ser-125.

The protein belongs to the peptidase S1 family. Plasma; synthesized in the liver.

The protein localises to the secreted. Its subcellular location is the golgi apparatus. The protein resides in the endoplasmic reticulum. The catalysed reaction is Degradation of blood coagulation factors Va and VIIIa.. Its function is as follows. Protein C is a vitamin K-dependent serine protease that regulates blood coagulation by inactivating factors Va and VIIIa in the presence of calcium ions and phospholipids. Exerts a protective effect on the endothelial cell barrier function. This is Vitamin K-dependent protein C (PROC) from Felis catus (Cat).